The sequence spans 201 residues: Thymidine kinase (201 aa).

Residues 9 to 16 and 87 to 90 contribute to the ATP site; these read SAMNAGKS and DECH. The active-site Proton acceptor is Glu88. Residues Cys145, Cys147, Cys182, and His185 each coordinate Zn(2+).

It belongs to the thymidine kinase family. As to quaternary structure, homotetramer.

Its subcellular location is the cytoplasm. It carries out the reaction thymidine + ATP = dTMP + ADP + H(+). This is Thymidine kinase from Photorhabdus laumondii subsp. laumondii (strain DSM 15139 / CIP 105565 / TT01) (Photorhabdus luminescens subsp. laumondii).